A 121-amino-acid polypeptide reads, in one-letter code: Large ribosomal subunit protein uL14 (121 aa).

The protein belongs to the universal ribosomal protein uL14 family. In terms of assembly, part of the 50S ribosomal subunit. Forms a cluster with proteins L3 and L19. In the 70S ribosome, L14 and L19 interact and together make contacts with the 16S rRNA in bridges B5 and B8.

Its function is as follows. Binds to 23S rRNA. Forms part of two intersubunit bridges in the 70S ribosome. This is Large ribosomal subunit protein uL14 from Hydrogenobaculum sp. (strain Y04AAS1).